Here is a 426-residue protein sequence, read N- to C-terminus: Serine--tRNA ligase (426 aa).

233-235 (TSE) is an L-serine binding site. 264 to 266 (RAE) is an ATP binding site. Glu-287 contacts L-serine. Position 351–354 (351–354 (EISS)) interacts with ATP. Ser-387 serves as a coordination point for L-serine.

This sequence belongs to the class-II aminoacyl-tRNA synthetase family. Type-1 seryl-tRNA synthetase subfamily. Homodimer. The tRNA molecule binds across the dimer.

It localises to the cytoplasm. The enzyme catalyses tRNA(Ser) + L-serine + ATP = L-seryl-tRNA(Ser) + AMP + diphosphate + H(+). It catalyses the reaction tRNA(Sec) + L-serine + ATP = L-seryl-tRNA(Sec) + AMP + diphosphate + H(+). It functions in the pathway aminoacyl-tRNA biosynthesis; selenocysteinyl-tRNA(Sec) biosynthesis; L-seryl-tRNA(Sec) from L-serine and tRNA(Sec): step 1/1. Its function is as follows. Catalyzes the attachment of serine to tRNA(Ser). Is also able to aminoacylate tRNA(Sec) with serine, to form the misacylated tRNA L-seryl-tRNA(Sec), which will be further converted into selenocysteinyl-tRNA(Sec). The polypeptide is Serine--tRNA ligase (Stenotrophomonas maltophilia (strain R551-3)).